The sequence spans 783 residues: Polyadenylate-binding protein, cytoplasmic and nuclear (783 aa).

Residues 16–65 (DLGNTSLGGGDNRAAPAINTNVAPGEYQTADPDTAGPTPSSAAPHPQSSA) are disordered. A compositionally biased stretch (low complexity) spans 54–65 (PSSAAPHPQSSA). 4 consecutive RRM domains span residues 65-143 (ASLY…WSQR), 153-230 (GNVF…YHIP), 246-323 (TNIY…RAQK), and 349-471 (VNLY…LAQR). Disordered regions lie at residues 381-428 (MRDA…KGDR), 596-671 (AAAL…AAGG), and 752-783 (VKSQQGPGQGPAPTQGEAEAEKPKEEKAEEKA). A compositionally biased stretch (basic and acidic residues) spans 396–406 (GKDKENKKEGE). Over residues 407–416 (QAAEAEGEAE) the composition is skewed to acidic residues. Over residues 417 to 428 (GAEKKTEKKGDR) the composition is skewed to basic and acidic residues. The span at 601–614 (NGRGGPGGPGGRGM) shows a compositional bias: gly residues. A compositionally biased stretch (low complexity) spans 630 to 641 (AGFPPNGRPQNG). Residues 642–655 (NMGGRGGPGRGGNF) show a composition bias toward gly residues. Residues 656-671 (AAGRGAPPAGPLAAGG) show a composition bias toward low complexity. A PABC domain is found at 676–753 (SSLLQSQLTA…AMAVYDEYVK (78 aa)). Residues 770-783 (EAEKPKEEKAEEKA) show a composition bias toward basic and acidic residues.

It belongs to the polyadenylate-binding protein type-1 family.

Its subcellular location is the cytoplasm. It is found in the nucleus. In terms of biological role, binds the poly(A) tail of mRNA. Appears to be an important mediator of the multiple roles of the poly(A) tail in mRNA biogenesis, stability and translation. In the nucleus, involved in both mRNA cleavage and polyadenylation. Is also required for efficient mRNA export to the cytoplasm. Acts in concert with a poly(A)-specific nuclease (PAN) to affect poly(A) tail shortening, which may occur concomitantly with either nucleocytoplasmic mRNA transport or translational initiation. In the cytoplasm, stimulates translation initiation and regulates mRNA decay through translation termination-coupled poly(A) shortening, probably mediated by PAN. The protein is Polyadenylate-binding protein, cytoplasmic and nuclear (PAB1) of Chaetomium globosum (strain ATCC 6205 / CBS 148.51 / DSM 1962 / NBRC 6347 / NRRL 1970) (Soil fungus).